The following is a 215-amino-acid chain: Pyridoxine/pyridoxamine 5'-phosphate oxidase (215 aa).

Substrate is bound by residues 9 to 12 (RRDY) and Lys69. FMN is bound by residues 64–69 (RVLLLK), 79–80 (FT), Lys86, and Gln108. Substrate contacts are provided by Tyr126, Arg130, and Ser134. Residues 143–144 (QS) and Trp188 contribute to the FMN site. A substrate-binding site is contributed by 194–196 (RLH). Residue Arg198 coordinates FMN.

This sequence belongs to the pyridoxamine 5'-phosphate oxidase family. As to quaternary structure, homodimer. FMN is required as a cofactor.

The catalysed reaction is pyridoxamine 5'-phosphate + O2 + H2O = pyridoxal 5'-phosphate + H2O2 + NH4(+). It carries out the reaction pyridoxine 5'-phosphate + O2 = pyridoxal 5'-phosphate + H2O2. Its pathway is cofactor metabolism; pyridoxal 5'-phosphate salvage; pyridoxal 5'-phosphate from pyridoxamine 5'-phosphate: step 1/1. It functions in the pathway cofactor metabolism; pyridoxal 5'-phosphate salvage; pyridoxal 5'-phosphate from pyridoxine 5'-phosphate: step 1/1. Functionally, catalyzes the oxidation of either pyridoxine 5'-phosphate (PNP) or pyridoxamine 5'-phosphate (PMP) into pyridoxal 5'-phosphate (PLP). This chain is Pyridoxine/pyridoxamine 5'-phosphate oxidase, found in Pseudomonas savastanoi pv. phaseolicola (strain 1448A / Race 6) (Pseudomonas syringae pv. phaseolicola (strain 1448A / Race 6)).